The primary structure comprises 126 residues: Flagellar protein FliT (126 aa).

The segment at 1-50 (MASPHRLLKDYQQLLSLSQKILHLAVNGQWDTLVEQEIVYVQSVEGLVNT) is required for homodimerization. The tract at residues 60–98 (MRLHLRQILQEVMDNEAKVKQLLQKRMDELSSLMGQSLK) is fliD binding.

The protein belongs to the FliT family. In terms of assembly, homodimer. Interacts with FliD and FlhC.

The protein localises to the cytoplasm. Its subcellular location is the cytosol. Functionally, dual-function protein that regulates the transcription of class 2 flagellar operons and that also acts as an export chaperone for the filament-capping protein FliD. As a transcriptional regulator, acts as an anti-FlhDC factor; it directly binds FlhC, thus inhibiting the binding of the FlhC/FlhD complex to class 2 promoters, resulting in decreased expression of class 2 flagellar operons. As a chaperone, effects FliD transition to the membrane by preventing its premature polymerization, and by directing it to the export apparatus. This chain is Flagellar protein FliT, found in Pectobacterium carotovorum subsp. carotovorum (strain PC1).